We begin with the raw amino-acid sequence, 733 residues long: Catalase-peroxidase (733 aa).

The segment at 1-24 is disordered; the sequence is MTDDSTCPVTGGADKQVTGRGQSY. A cross-link (tryptophyl-tyrosyl-methioninium (Trp-Tyr) (with M-245)) is located at residues 96-219; the sequence is WHSAGTYRTL…LAAVQMGLIY (124 aa). Histidine 97 functions as the Proton acceptor in the catalytic mechanism. A cross-link (tryptophyl-tyrosyl-methioninium (Tyr-Met) (with W-96)) is located at residues 219–245; the sequence is YVNPEGPNGKPDPVAAAKDIRETFARM. Heme b is bound at residue histidine 260.

The protein belongs to the peroxidase family. Peroxidase/catalase subfamily. Homodimer or homotetramer. The cofactor is heme b. Post-translationally, formation of the three residue Trp-Tyr-Met cross-link is important for the catalase, but not the peroxidase activity of the enzyme.

It catalyses the reaction H2O2 + AH2 = A + 2 H2O. The enzyme catalyses 2 H2O2 = O2 + 2 H2O. Bifunctional enzyme with both catalase and broad-spectrum peroxidase activity. In Methanoregula boonei (strain DSM 21154 / JCM 14090 / 6A8), this protein is Catalase-peroxidase.